The chain runs to 153 residues: Deoxyuridine 5'-triphosphate nucleotidohydrolase (153 aa).

Residues 71–73, asparagine 84, 88–90, and methionine 98 each bind substrate; these read RSG and LID.

Belongs to the dUTPase family. The cofactor is Mg(2+).

The enzyme catalyses dUTP + H2O = dUMP + diphosphate + H(+). Its pathway is pyrimidine metabolism; dUMP biosynthesis; dUMP from dCTP (dUTP route): step 2/2. Its function is as follows. This enzyme is involved in nucleotide metabolism: it produces dUMP, the immediate precursor of thymidine nucleotides and it decreases the intracellular concentration of dUTP so that uracil cannot be incorporated into DNA. In Hydrogenovibrio crunogenus (strain DSM 25203 / XCL-2) (Thiomicrospira crunogena), this protein is Deoxyuridine 5'-triphosphate nucleotidohydrolase.